Reading from the N-terminus, the 417-residue chain is Creatine kinase U-type, mitochondrial (417 aa).

The N-terminal 39 residues, 1-39 (MAGPFSRLLSARPGLRLLALAGAGSLAAGFLLRPEPVRA), are a transit peptide targeting the mitochondrion. Residues 40-64 (ASERRRLYPPSAEYPDLRKHNNCMA) form a cardiolipin-binding region. Positions 45-131 (RLYPPSAEYP…FDPVIQERHN (87 aa)) constitute a Phosphagen kinase N-terminal domain. Ser-151 carries the post-translational modification Phosphoserine. The region spanning 158–400 (YVLSSRVRTG…NYLIDCERRL (243 aa)) is the Phosphagen kinase C-terminal domain. Residue 161–165 (SSRVR) participates in ATP binding. Phosphoserine is present on Ser-196. Thr-213 carries the post-translational modification Phosphothreonine. His-224 contributes to the ATP binding site. Ser-232 is subject to Phosphoserine. ATP-binding positions include Arg-269, Arg-325, 353 to 358 (RGTGGV), and Asp-368. Thr-355 is subject to Phosphothreonine.

The protein belongs to the ATP:guanido phosphotransferase family. As to quaternary structure, exists as an octamer composed of four MTCK homodimers.

The protein localises to the mitochondrion inner membrane. It catalyses the reaction creatine + ATP = N-phosphocreatine + ADP + H(+). Reversibly catalyzes the transfer of phosphate between ATP and various phosphogens (e.g. creatine phosphate). Creatine kinase isoenzymes play a central role in energy transduction in tissues with large, fluctuating energy demands, such as skeletal muscle, heart, brain and spermatozoa. This Homo sapiens (Human) protein is Creatine kinase U-type, mitochondrial (CKMT1A).